Here is a 246-residue protein sequence, read N- to C-terminus: 3-deoxy-manno-octulosonate cytidylyltransferase (246 aa).

This sequence belongs to the KdsB family.

The protein localises to the cytoplasm. The enzyme catalyses 3-deoxy-alpha-D-manno-oct-2-ulosonate + CTP = CMP-3-deoxy-beta-D-manno-octulosonate + diphosphate. It functions in the pathway nucleotide-sugar biosynthesis; CMP-3-deoxy-D-manno-octulosonate biosynthesis; CMP-3-deoxy-D-manno-octulosonate from 3-deoxy-D-manno-octulosonate and CTP: step 1/1. The protein operates within bacterial outer membrane biogenesis; lipopolysaccharide biosynthesis. In terms of biological role, activates KDO (a required 8-carbon sugar) for incorporation into bacterial lipopolysaccharide in Gram-negative bacteria. In Rickettsia felis (strain ATCC VR-1525 / URRWXCal2) (Rickettsia azadi), this protein is 3-deoxy-manno-octulosonate cytidylyltransferase.